Here is a 306-residue protein sequence, read N- to C-terminus: Protein-methionine-sulfoxide reductase catalytic subunit MsrP (306 aa).

Positions 1-45 (MLIRHAPDLTDNDVTDHSLYLKRRTLMAGVAGLGVAGASASHAQA) form a signal peptide, tat-type signal. Residues Asn-69, 72-73 (YE), Cys-127, Thr-162, Asn-210, Arg-215, and 226-228 (GIK) contribute to the Mo-molybdopterin site.

It belongs to the MsrP family. As to quaternary structure, heterodimer of a catalytic subunit (MsrP) and a heme-binding subunit (MsrQ). Mo-molybdopterin is required as a cofactor. In terms of processing, predicted to be exported by the Tat system. The position of the signal peptide cleavage has not been experimentally proven.

The protein localises to the periplasm. It carries out the reaction L-methionyl-[protein] + a quinone + H2O = L-methionyl-(S)-S-oxide-[protein] + a quinol. It catalyses the reaction L-methionyl-[protein] + a quinone + H2O = L-methionyl-(R)-S-oxide-[protein] + a quinol. Part of the MsrPQ system that repairs oxidized periplasmic proteins containing methionine sulfoxide residues (Met-O), using respiratory chain electrons. Thus protects these proteins from oxidative-stress damage caused by reactive species of oxygen and chlorine generated by the host defense mechanisms. MsrPQ is essential for the maintenance of envelope integrity under bleach stress, rescuing a wide series of structurally unrelated periplasmic proteins from methionine oxidation. The catalytic subunit MsrP is non-stereospecific, being able to reduce both (R-) and (S-) diastereoisomers of methionine sulfoxide. This is Protein-methionine-sulfoxide reductase catalytic subunit MsrP from Caulobacter vibrioides (strain ATCC 19089 / CIP 103742 / CB 15) (Caulobacter crescentus).